We begin with the raw amino-acid sequence, 445 residues long: Tubulin beta-3 chain (445 aa).

Glutamine 11, glutamate 69, serine 138, glycine 142, threonine 143, glycine 144, asparagine 204, and asparagine 226 together coordinate GTP. Glutamate 69 provides a ligand contact to Mg(2+). The tract at residues 421 to 445 (EYQQYQDATADEEEEYDEEEEEEAA) is disordered. Acidic residues predominate over residues 429–445 (TADEEEEYDEEEEEEAA).

The protein belongs to the tubulin family. Dimer of alpha and beta chains. A typical microtubule is a hollow water-filled tube with an outer diameter of 25 nm and an inner diameter of 15 nM. Alpha-beta heterodimers associate head-to-tail to form protofilaments running lengthwise along the microtubule wall with the beta-tubulin subunit facing the microtubule plus end conferring a structural polarity. Microtubules usually have 13 protofilaments but different protofilament numbers can be found in some organisms and specialized cells. It depends on Mg(2+) as a cofactor.

The protein localises to the cytoplasm. It is found in the cytoskeleton. In terms of biological role, tubulin is the major constituent of microtubules, a cylinder consisting of laterally associated linear protofilaments composed of alpha- and beta-tubulin heterodimers. Microtubules grow by the addition of GTP-tubulin dimers to the microtubule end, where a stabilizing cap forms. Below the cap, tubulin dimers are in GDP-bound state, owing to GTPase activity of alpha-tubulin. The sequence is that of Tubulin beta-3 chain (TUBB3) from Triticum aestivum (Wheat).